Consider the following 391-residue polypeptide: Phosphoprotein (391 aa).

A phosphothreonine mark is found at Thr-10 and Thr-16. Residues 54–65 (QKNIQHPTASHQ) are compositionally biased toward polar residues. Disordered regions lie at residues 54–98 (QKNI…EPLF) and 148–184 (PVTEFKRGGPGAAAQGQTIQEEGIDGNGASAGSKERS). Phosphoserine is present on Ser-69. Residues Thr-91, Thr-150, and Thr-165 each carry the phosphothreonine modification. Ser-188 bears the Phosphoserine mark. The multimerization stretch occupies residues 216–279 (ISANEIMDLL…MATVKIMDPG (64 aa)). The stretch at 218-245 (ANEIMDLLRGMDARLQHLEQKVDKVLAQ) forms a coiled coil. Position 250 is a phosphothreonine (Thr-250). Residue Ser-257 is modified to Phosphoserine. Residues Thr-258 and Thr-282 each carry the phosphothreonine modification. Ser-292 and Ser-294 each carry phosphoserine. The residue at position 298 (Thr-298) is a Phosphothreonine. 2 positions are modified to phosphoserine: Ser-301 and Ser-374. The interval 343 to 391 (AGRKVMITKMITDCVANPQMKQAFEQRLAKASTEDALNDIKRDIIRSAI) is interaction with the nucleoprotein. A Phosphothreonine modification is found at Thr-375.

It belongs to the rubulavirus/avulavirus P protein family. As to quaternary structure, homotetramer. Interacts (via multimerization domain) with polymerase L; this interaction forms the polymerase L-P complex. Interacts (via N-terminus) with N0 (via Ncore); this interaction allows P to chaperon N0 to avoid N polymerization before encapsidation. Interacts (via C-terminus) with N-RNA template; this interaction positions the polymerase on the template for both transcription and replication. Interacts with host RPS6KB1 kinase; this interaction may play a role in the viral replication and transcription.

Essential cofactor of the RNA polymerase L that plays a central role in the transcription and replication by forming the polymerase complex with RNA polymerase L and recruiting L to the genomic N-RNA template for RNA synthesis. Also plays a central role in the encapsidation of nascent RNA chains by forming the encapsidation complex with the nucleocapsid protein N (N-P complex). Acts as a chaperone for newly synthesized free N protein, so-called N0, allowing encapsidation of nascent RNA chains during replication. The nucleoprotein protein N prevents excessive phosphorylation of P, which leads to down-regulation of viral transcription/ replication. Participates, together with N, in the formation of viral factories (viroplasms), which are large inclusions in the host cytoplasm where replication takes place. This chain is Phosphoprotein, found in Mumps virus (strain Enders) (MuV).